Consider the following 206-residue polypeptide: Repetitive proline-rich cell wall protein 1 (206 aa).

A signal peptide spans 1-22 (MASSNFLVLLLFALFAIPQGLA). A run of 33 repeats spans residues 32–36 (PPVYK), 37–41 (PPVEK), 42–46 (PPVYK), 47–51 (PPVEK), 52–56 (PPVYK), 57–61 (PPVEK), 62–66 (PPVYK), 67–71 (PPVYK), 72–76 (PPVYK), 77–81 (PPVVK), 82–86 (PPVYK), 87–91 (PPVYK), 92–96 (PPVYK), 97–101 (PPVYK), 102–106 (PPVEK), 107–111 (PPVYK), 112–116 (PPVYK), 117–121 (PPVVK), 122–126 (PPVYK), 127–131 (PPVYK), 132–136 (PPVEK), 137–141 (PPVYK), 142–146 (PPVVK), 147–151 (PPVYK), 152–156 (PPVYK), 157–161 (PPVVK), 162–166 (PPVYK), 167–171 (PPVYK), 172–176 (PPVYK), 177–181 (PPVEK), 182–186 (PPVYK), 187–191 (PPVYK), and 192–196 (PPVEK). A 34 X 5 AA approximate tandem repeats of P-P-V-[EVY]-K region spans residues 32–201 (PPVYKPPVEK…PPVEKPPVYG (170 aa)). Positions 51 to 84 (KPPVYKPPVEKPPVYKPPVYKPPVYKPPVVKPPV) are disordered. The interval 132–206 (PPVEKPPVYK…PPVYGPPHHP (75 aa)) is disordered. The 34; approximate repeat unit spans residues 197 to 201 (PPVYG).

This sequence belongs to the plant proline-rich protein superfamily. ENOD12 family. In terms of tissue distribution, expressed in hypocotyls, roots and mature root nodules.

Its subcellular location is the secreted. The protein localises to the cell wall. Its function is as follows. This is a developmentally regulated putative cell wall protein. The polypeptide is Repetitive proline-rich cell wall protein 1 (PRP1) (Medicago truncatula (Barrel medic)).